The following is a 135-amino-acid chain: Transcription antitermination protein NusB (135 aa).

The protein belongs to the NusB family.

Its function is as follows. Involved in transcription antitermination. Required for transcription of ribosomal RNA (rRNA) genes. Binds specifically to the boxA antiterminator sequence of the ribosomal RNA (rrn) operons. The polypeptide is Transcription antitermination protein NusB (Shewanella piezotolerans (strain WP3 / JCM 13877)).